A 501-amino-acid polypeptide reads, in one-letter code: Circadian clock oscillator protein KaiC (501 aa).

KaiC domains lie at 1-232 (MQVQ…ITVF) and 246-501 (IRIS…REKK). 17 residues coordinate ATP: G34, T35, G36, K37, T38, S74, K209, L210, R211, T213, H215, T275, G276, T277, G278, K279, and T280. Position 38 (T38) interacts with Mg(2+). Mg(2+)-binding residues include T280 and E303. Residue W316 coordinates ATP. Position 416 is a phosphoserine; by autocatalysis (S416). The residue at position 417 (T417) is a Phosphothreonine; by autocatalysis. ATP is bound by residues R436, K442, M443, R444, S446, H448, and K450.

The protein belongs to the KaiC family. Homohexamer; hexamerization is dependent on ATP-binding. Component of the KaiBC complex. KaiC interacts with SasA, activating its autokinase function and leading to RpaA activation. The cofactor is Mg(2+). Phosphorylated on serine and threonine residues by autocatalysis. Has a 4 step phosphorylation cycle; the autokinase acts first on Thr-417, then Ser-416. When Ser-416 is modified KaiC switches to an autophosphatase mode, acting first on phospho-Thr-417 then phospho-Ser-416.

The catalysed reaction is L-seryl-[protein] + ATP = O-phospho-L-seryl-[protein] + ADP + H(+). It carries out the reaction L-threonyl-[protein] + ATP = O-phospho-L-threonyl-[protein] + ADP + H(+). The enzyme catalyses ATP + H2O = ADP + phosphate + H(+). Its function is as follows. Central component of the KaiBC oscillator complex, which constitutes the main circadian regulator in cyanobacteria. Its composition changes during the circadian cycle to control KaiC phosphorylation. Autophosphorylates and has a weak ATPase activity; ATPase activity defines the circadian period. The polypeptide is Circadian clock oscillator protein KaiC (Prochlorococcus marinus (strain SARG / CCMP1375 / SS120)).